Reading from the N-terminus, the 416-residue chain is D-amino acid dehydrogenase (416 aa).

3 to 17 contacts FAD; that stretch reads ITILGSGVIGVTTAY.

The protein belongs to the DadA oxidoreductase family. FAD is required as a cofactor.

The catalysed reaction is a D-alpha-amino acid + A + H2O = a 2-oxocarboxylate + AH2 + NH4(+). Its function is as follows. Oxidative deamination of D-amino acids. The protein is D-amino acid dehydrogenase of Brucella suis biovar 1 (strain 1330).